Consider the following 482-residue polypeptide: Ubiquitin carboxyl-terminal hydrolase 6 (482 aa).

Residues 2 to 77 (PTVSVKWQKK…LMMMGTADEI (76 aa)) form the Ubiquitin-like domain. The region spanning 104 to 478 (AGLVNLGNTC…MAYITMYKAR (375 aa)) is the USP domain. The active-site Nucleophile is the cysteine 113. Residues 172-191 (SQFWMVLRKKYPQFSQLQNG) form a calmodulin-binding region. Composition is skewed to basic and acidic residues over residues 350-361 (PRQKLREEEGKK) and 371-381 (GSKDSDVKMTD). The disordered stretch occupies residues 350 to 407 (PRQKLREEEGKKLGLQTSAKSGSKDSDVKMTDAEASANGSGESSTVNPQEGTSSEKET). Residues 382-393 (AEASANGSGESS) show a composition bias toward low complexity. Histidine 430 functions as the Proton acceptor in the catalytic mechanism.

Belongs to the peptidase C19 family. In terms of assembly, interacts with calmodulin (CaM).

The enzyme catalyses Thiol-dependent hydrolysis of ester, thioester, amide, peptide and isopeptide bonds formed by the C-terminal Gly of ubiquitin (a 76-residue protein attached to proteins as an intracellular targeting signal).. Functionally, recognizes and hydrolyzes the peptide bond at the C-terminal Gly of ubiquitin. Involved in the processing of poly-ubiquitin precursors as well as that of ubiquitinated proteins. In Arabidopsis thaliana (Mouse-ear cress), this protein is Ubiquitin carboxyl-terminal hydrolase 6 (UBP6).